A 901-amino-acid chain; its full sequence is DNA mismatch repair protein MutS (901 aa).

Residues 1 to 12 are compositionally biased toward polar residues; that stretch reads MKYSASTSTPKS. Residues 1–25 form a disordered region; the sequence is MKYSASTSTPKSAQPKEEELENSLP. 679–686 contributes to the ATP binding site; that stretch reads GPNASGKS.

It belongs to the DNA mismatch repair MutS family.

In terms of biological role, this protein is involved in the repair of mismatches in DNA. It is possible that it carries out the mismatch recognition step. This protein has a weak ATPase activity. The chain is DNA mismatch repair protein MutS from Trichodesmium erythraeum (strain IMS101).